The sequence spans 341 residues: Anthranilate phosphoribosyltransferase (341 aa).

Residues Gly80, Gly83–Asp84, Thr88, Asn90–Thr93, Lys108–Ser116, and Ser120 contribute to the 5-phospho-alpha-D-ribose 1-diphosphate site. Gly80 serves as a coordination point for anthranilate. Ser92 contacts Mg(2+). Asn111 lines the anthranilate pocket. Position 166 (Arg166) interacts with anthranilate. The Mg(2+) site is built by Asp224 and Glu225.

It belongs to the anthranilate phosphoribosyltransferase family. In terms of assembly, homodimer. It depends on Mg(2+) as a cofactor.

The enzyme catalyses N-(5-phospho-beta-D-ribosyl)anthranilate + diphosphate = 5-phospho-alpha-D-ribose 1-diphosphate + anthranilate. It participates in amino-acid biosynthesis; L-tryptophan biosynthesis; L-tryptophan from chorismate: step 2/5. Catalyzes the transfer of the phosphoribosyl group of 5-phosphorylribose-1-pyrophosphate (PRPP) to anthranilate to yield N-(5'-phosphoribosyl)-anthranilate (PRA). This is Anthranilate phosphoribosyltransferase from Haloquadratum walsbyi (strain DSM 16790 / HBSQ001).